Consider the following 471-residue polypeptide: Glutamate--tRNA ligase (471 aa).

Positions 9–19 match the 'HIGH' region motif; sequence PSPTGYLHVGG. Zn(2+) is bound by residues C98, C100, C125, and H127. Positions 237 to 241 match the 'KMSKS' region motif; the sequence is KLSKR. Residue K240 coordinates ATP.

Belongs to the class-I aminoacyl-tRNA synthetase family. Glutamate--tRNA ligase type 1 subfamily. In terms of assembly, monomer. It depends on Zn(2+) as a cofactor.

It localises to the cytoplasm. The catalysed reaction is tRNA(Glu) + L-glutamate + ATP = L-glutamyl-tRNA(Glu) + AMP + diphosphate. Functionally, catalyzes the attachment of glutamate to tRNA(Glu) in a two-step reaction: glutamate is first activated by ATP to form Glu-AMP and then transferred to the acceptor end of tRNA(Glu). The chain is Glutamate--tRNA ligase from Shigella boydii serotype 18 (strain CDC 3083-94 / BS512).